The sequence spans 158 residues: S-ribosylhomocysteine lyase (158 aa).

Positions 56, 60, and 125 each coordinate Fe cation.

It belongs to the LuxS family. As to quaternary structure, homodimer. Requires Fe cation as cofactor.

The catalysed reaction is S-(5-deoxy-D-ribos-5-yl)-L-homocysteine = (S)-4,5-dihydroxypentane-2,3-dione + L-homocysteine. Its function is as follows. Involved in the synthesis of autoinducer 2 (AI-2) which is secreted by bacteria and is used to communicate both the cell density and the metabolic potential of the environment. The regulation of gene expression in response to changes in cell density is called quorum sensing. Catalyzes the transformation of S-ribosylhomocysteine (RHC) to homocysteine (HC) and 4,5-dihydroxy-2,3-pentadione (DPD). This is S-ribosylhomocysteine lyase from Leuconostoc citreum (strain KM20).